Reading from the N-terminus, the 763-residue chain is Actin filament-associated protein 1-like 1 (763 aa).

The segment at 83–137 (LQDMPEDEAESCKAASPEPAKSPSLRHTADLPPPLPNRPPPEDYYEEALPLGPGK) is disordered. Ser98, Ser104, and Ser153 each carry phosphoserine. A disordered region spans residues 169–210 (TRMNGELKNSYNDSDAMSSSYESYDEEEEEGKGPQPTHQWPS). The segment covering 175–185 (LKNSYNDSDAM) has biased composition (polar residues). In terms of domain architecture, PH 1 spans 220–316 (DCRICAFLLR…WLKVIREVSK (97 aa)). Residues Ser329 and Ser343 each carry the phosphoserine modification. Residues 343–380 (SQEKQTSDSDSLGMGDSCSTLGREHGKGKKSSLSELKG) are disordered. The PH 2 domain occupies 413–507 (EVPCCGYLNV…WLGLLLVEMG (95 aa)). Position 552 is a phosphotyrosine (Tyr552). Residues 561–604 (QDEEPERPPGAQVKRHASTCSEKSHRVDPQVKVKRHASSAHQYK) form a disordered region. Basic and acidic residues predominate over residues 582–591 (EKSHRVDPQV). Positions 606–694 (GKNRAEEDAR…LVTVKERLQQ (89 aa)) form a coiled coil. The span at 712–724 (SGETANKPQNNVP) shows a compositional bias: polar residues. The segment at 712–763 (SGETANKPQNNVPEQPLPVNCVSELRKRSPSIINSNQGRVLQKAKEWEMKKT) is disordered. Position 742 is a phosphoserine (Ser742). Residues 754-763 (KAKEWEMKKT) are compositionally biased toward basic and acidic residues.

Interacts with CTTN.

It is found in the cytoplasm. Its subcellular location is the cell projection. It localises to the podosome. The protein resides in the invadopodium. The protein localises to the cytoskeleton. It is found in the stress fiber. May be involved in podosome and invadosome formation. This chain is Actin filament-associated protein 1-like 1 (AFAP1L1), found in Bos taurus (Bovine).